A 272-amino-acid polypeptide reads, in one-letter code: MNNRVHQGHFARKRFGQNFLNDQFVIDSIVSAIHPVPGEAVVEIGPGLGALTEPVAARMDHMTVIELDRDLADRLASHPQLKDKLTIHQEDAMKINFSELAELAGQPLRVFGNLPYNISTPLMFHLFSYTSAIRDMHFMLQKEVVNRLVAGPNSKAYGRLTVMAQYYCNVIPVLEVPPTAFTPAPKVDSAVVRLIPHVNTPNPVGDVRMLSRITTQAFNQRRKTVRNSLGDLFTPEQLIELGIDPILRAENISVAQYCKLANWLSAQSTPQE.

S-adenosyl-L-methionine contacts are provided by Asn18, Leu20, Gly45, Glu66, Asp91, and Asn113.

Belongs to the class I-like SAM-binding methyltransferase superfamily. rRNA adenine N(6)-methyltransferase family. RsmA subfamily.

The protein localises to the cytoplasm. The enzyme catalyses adenosine(1518)/adenosine(1519) in 16S rRNA + 4 S-adenosyl-L-methionine = N(6)-dimethyladenosine(1518)/N(6)-dimethyladenosine(1519) in 16S rRNA + 4 S-adenosyl-L-homocysteine + 4 H(+). Functionally, specifically dimethylates two adjacent adenosines (A1518 and A1519) in the loop of a conserved hairpin near the 3'-end of 16S rRNA in the 30S particle. May play a critical role in biogenesis of 30S subunits. This is Ribosomal RNA small subunit methyltransferase A from Yersinia enterocolitica serotype O:8 / biotype 1B (strain NCTC 13174 / 8081).